The following is a 240-amino-acid chain: Glutathione S-transferase theta-1 (240 aa).

In terms of domain architecture, GST N-terminal spans 2–82 (VLELYLDLLS…YLAHKYKVPD (81 aa)). Glutathione is bound by residues H40, 53 to 54 (RV), and 66 to 67 (ES). Residues 88–222 (DLQARARVDE…VILKVKDCPP (135 aa)) enclose the GST C-terminal domain.

This sequence belongs to the GST superfamily. Theta family. In terms of assembly, homodimer. In terms of tissue distribution, in liver, highest expression found in central vein limiting plate hepatocytes. Also expressed in interlobular bile duct epithelial cells. In lung, expressed in club cells and ciliated cells of the bronchiolar epithelium and in type II alveolar cells of the lung parenchyma.

The protein resides in the cytoplasm. It localises to the nucleus. The enzyme catalyses RX + glutathione = an S-substituted glutathione + a halide anion + H(+). In terms of biological role, conjugation of reduced glutathione to a wide number of exogenous and endogenous hydrophobic electrophiles. Also binds steroids, bilirubin, carcinogens and numerous organic anions. Has dichloromethane dehalogenase activity. This is Glutathione S-transferase theta-1 (Gstt1) from Mus musculus (Mouse).